We begin with the raw amino-acid sequence, 395 residues long: MAQLETRTEPMVVNFGPHHPSMHGVLRLVVTLDGENVIDCEPVIGYLHRGMEKIAENRTNVMYVPYVSRMDYAAGMFYEAIVVNAPERLANIPVPKRASYIRVLMLELNRIANHLLWLGPFLADVGAQTPFFYIFREREMIYDLWEAATGQRLINNNFFRIGGVACDLPYGWLEKCIDFCDWFGPKIDEYEKLITNNPIFRKRIEGLGTIERDQAINWSLSGPMLRASGVSWDLRKVDSYECYDDFDWQIASEKEGDCYARYRVRVEEMRQSLSIIRQACKMIPGGPTENLEAQRMATEDKKSEIFGIDYQYVAKKVAPTFKIPNGELYTRLESGKGEIGVFIQGNNEVTPWRFKIRAADLNNLQILPHILKGAKIADIMAILGSIDVIMGSVDR.

It belongs to the complex I 49 kDa subunit family. As to quaternary structure, NDH-1 can be composed of about 15 different subunits; different subcomplexes with different compositions have been identified which probably have different functions.

Its subcellular location is the cellular thylakoid membrane. It catalyses the reaction a plastoquinone + NADH + (n+1) H(+)(in) = a plastoquinol + NAD(+) + n H(+)(out). The catalysed reaction is a plastoquinone + NADPH + (n+1) H(+)(in) = a plastoquinol + NADP(+) + n H(+)(out). Its function is as follows. NDH-1 shuttles electrons from an unknown electron donor, via FMN and iron-sulfur (Fe-S) centers, to quinones in the respiratory and/or the photosynthetic chain. The immediate electron acceptor for the enzyme in this species is believed to be plastoquinone. Couples the redox reaction to proton translocation, and thus conserves the redox energy in a proton gradient. Cyanobacterial NDH-1 also plays a role in inorganic carbon-concentration. The polypeptide is NAD(P)H-quinone oxidoreductase subunit H (Prochlorococcus marinus (strain MIT 9312)).